Here is a 145-residue protein sequence, read N- to C-terminus: Large ribosomal subunit protein mL43 (145 aa).

It belongs to the mitochondrion-specific ribosomal protein mL43 family. In terms of assembly, component of the mitochondrial large ribosomal subunit (mt-LSU). Mature yeast 74S mitochondrial ribosomes consist of a small (37S) and a large (54S) subunit. The 37S small subunit contains a 15S ribosomal RNA (15S mt-rRNA) and at least 32 different proteins. The 54S large subunit contains a 21S rRNA (21S mt-rRNA) and at least 45 different proteins.

The protein localises to the mitochondrion. Its function is as follows. Component of the mitochondrial ribosome (mitoribosome), a dedicated translation machinery responsible for the synthesis of mitochondrial genome-encoded proteins, including at least some of the essential transmembrane subunits of the mitochondrial respiratory chain. The mitoribosomes are attached to the mitochondrial inner membrane and translation products are cotranslationally integrated into the membrane. Also has an extraribosomal function, being essential for mitochondrial genome integrity. May interact with MHR1 to take part in the mtDNA repair mechanism. The sequence is that of Large ribosomal subunit protein mL43 (mrpl51) from Schizosaccharomyces pombe (strain 972 / ATCC 24843) (Fission yeast).